Here is a 118-residue protein sequence, read N- to C-terminus: Large ribosomal subunit protein uL22c (118 aa).

It belongs to the universal ribosomal protein uL22 family. In terms of assembly, part of the 50S ribosomal subunit.

The protein resides in the plastid. The protein localises to the chloroplast. In terms of biological role, this protein binds specifically to 23S rRNA. Functionally, the globular domain of the protein is located near the polypeptide exit tunnel on the outside of the subunit, while an extended beta-hairpin is found that lines the wall of the exit tunnel in the center of the 70S ribosome. The polypeptide is Large ribosomal subunit protein uL22c (rpl22) (Rhodomonas salina (Cryptomonas salina)).